Here is a 917-residue protein sequence, read N- to C-terminus: Translation initiation factor IF-2 (917 aa).

The interval E241–K312 is disordered. A compositionally biased stretch (basic and acidic residues) spans A252–K262. The span at S274–E283 shows a compositional bias: polar residues. Positions T298–G308 are enriched in gly residues. The 168-residue stretch at P415–E582 folds into the tr-type G domain. The segment at G424–T431 is G1. Position 424-431 (G424–T431) interacts with GTP. Positions G449–H453 are G2. The interval D470 to G473 is G3. GTP-binding positions include D470–H474 and N524–D527. A G4 region spans residues N524 to D527. Positions S560–K562 are G5.

The protein belongs to the TRAFAC class translation factor GTPase superfamily. Classic translation factor GTPase family. IF-2 subfamily.

The protein localises to the cytoplasm. Its function is as follows. One of the essential components for the initiation of protein synthesis. Protects formylmethionyl-tRNA from spontaneous hydrolysis and promotes its binding to the 30S ribosomal subunits. Also involved in the hydrolysis of GTP during the formation of the 70S ribosomal complex. The polypeptide is Translation initiation factor IF-2 (Polynucleobacter necessarius subsp. necessarius (strain STIR1)).